The primary structure comprises 93 residues: Small ribosomal subunit protein uS19 (93 aa).

Belongs to the universal ribosomal protein uS19 family.

Functionally, protein S19 forms a complex with S13 that binds strongly to the 16S ribosomal RNA. The protein is Small ribosomal subunit protein uS19 of Syntrophus aciditrophicus (strain SB).